A 318-amino-acid chain; its full sequence is Taste receptor type 2 member 7 (318 aa).

Residues 1-9 (MTDKVQTTL) are Extracellular-facing. A helical membrane pass occupies residues 10–30 (LFLAIGEFSVGILGNAFIGLV). Over 31 to 55 (NCMDWVKKRKIASIDLILTSLAISR) the chain is Cytoplasmic. A helical membrane pass occupies residues 56–76 (ICLLCVILLDCFMLVLYPDVY). Residues 77-94 (ATGKQMRIIDFFWTLTNH) lie on the Extracellular side of the membrane. A helical membrane pass occupies residues 95–115 (LSIWFATCLSIYYFFKIANFF). Residues 116–128 (HPLFLWMKWRIDR) lie on the Cytoplasmic side of the membrane. A helical transmembrane segment spans residues 129–149 (VISWILLGCMVLSVFINLPAT). The Extracellular segment spans residues 150–187 (ENLNADFRRCVKAKRKTNLTWSCRVTKAQHASTKLFLN). Asn-167 carries an N-linked (GlcNAc...) asparagine glycan. Residues 188 to 208 (LVTLLPFSVCLMSFFLLILSL) traverse the membrane as a helical segment. Residues 209-235 (WRHIRRMQLSATGCRDPSTEAHVRALK) are Cytoplasmic-facing. Residues 236 to 256 (AVISFLLLFIAYYLSFLIATS) form a helical membrane-spanning segment. Over 257–266 (SYFIPETELA) the chain is Extracellular. A helical membrane pass occupies residues 267-287 (VIFGEFIALIYPSSHSFILIL). Over 288 to 318 (GNSKLRRASLKVLWTVMSILKGRKFQQHKQI) the chain is Cytoplasmic.

The protein belongs to the G-protein coupled receptor T2R family.

The protein resides in the membrane. In terms of biological role, gustducin-coupled receptor implicated in the perception of bitter compounds in the oral cavity and the gastrointestinal tract. Signals through PLCB2 and the calcium-regulated cation channel TRPM5. The chain is Taste receptor type 2 member 7 (TAS2R7) from Macaca mulatta (Rhesus macaque).